The primary structure comprises 423 residues: RNA polymerase sigma factor SigA (423 aa).

Residues 1 to 76 (MKKSKRKNAQ…EEDLPIPKIS (76 aa)) form a disordered region. Positions 21–70 (VQEEAEELPEFPEGEPDPDLEDPDLALEDDLLDLPEEGEGLDLEEEEEDL) are enriched in acidic residues. The tract at residues 78–113 (SDPVRQYLHEIGQVPLLTLEEEVELARKVEEGMEAI) is sigma-70 factor domain-1. The segment at 187–257 (LIEANLRLVV…NRAIADQART (71 aa)) is sigma-70 factor domain-2. Positions 211 to 214 (DLIQ) match the Interaction with polymerase core subunit RpoC motif. A sigma-70 factor domain-3 region spans residues 266–344 (ETINKLSRTA…DEHLPSPVDA (79 aa)). A sigma-70 factor domain-4 region spans residues 357-409 (ALSKLSEREAMVLKLRKGLIDGREHTLEEVGAFFGVTRERIRQIENKALRKLK). The H-T-H motif DNA-binding region spans 383 to 402 (LEEVGAFFGVTRERIRQIEN).

It belongs to the sigma-70 factor family. RpoD/SigA subfamily. In terms of assembly, interacts transiently with the RNA polymerase catalytic core formed by RpoA, RpoB, RpoC and RpoZ (2 alpha, 1 beta, 1 beta' and 1 omega subunit) to form the RNA polymerase holoenzyme that can initiate transcription.

It is found in the cytoplasm. Functionally, sigma factors are initiation factors that promote the attachment of RNA polymerase to specific initiation sites and are then released. This sigma factor is the primary sigma factor during exponential growth. The protein is RNA polymerase sigma factor SigA of Thermus thermophilus (strain ATCC BAA-163 / DSM 7039 / HB27).